A 561-amino-acid chain; its full sequence is ATP-dependent RNA helicase MRH4, mitochondrial (561 aa).

The N-terminal 26 residues, 1–26 (MSLFFKPVISPQWSFPVLLKIGVRSY), are a transit peptide targeting the mitochondrion. Positions 29–72 (GPRTKHKGNSPLASVPTGSSNKNRKQKAKGKKGNKKNDPDQAFN) are disordered. A compositionally biased stretch (basic residues) spans 50–62 (KNRKQKAKGKKGN). The Q motif signature appears at 98-129 (SNFDQLLILPPVRDAVKEIISKESLKLQDSRK). A Helicase ATP-binding domain is found at 131-319 (TSENIIPSPI…NINHLIFCSA (189 aa)). 144-151 (AIKRISKN) provides a ligand contact to ATP. The DEAD box signature appears at 267–270 (SIRM). The 190-residue stretch at 350–539 (ALDFKVINSA…KQGGRVFMLT (190 aa)) folds into the Helicase C-terminal domain.

It belongs to the DEAD box helicase family. MRH4 subfamily.

Its subcellular location is the mitochondrion. It carries out the reaction ATP + H2O = ADP + phosphate + H(+). In terms of biological role, ATP-binding RNA helicase involved in mitochondrial RNA metabolism. Required for maintenance of mitochondrial DNA. This chain is ATP-dependent RNA helicase MRH4, mitochondrial (MRH4), found in Saccharomyces cerevisiae (strain YJM789) (Baker's yeast).